The sequence spans 288 residues: Chitinase 5 (288 aa).

The N-terminal stretch at 1–29 (MANSPTPTMLAFLALGLALLLSATGQASA) is a signal peptide. Residues 30–64 (QNCGCQSNMCCSKWGYCGTGKDYCGDGCRSGPCYG) form the Chitin-binding type-1 domain. 7 cysteine pairs are disulfide-bonded: Cys32-Cys40, Cys34-Cys46, Cys39-Cys53, Cys57-Cys62, Cys107-Cys156, Cys169-Cys178, and Cys256-Cys288. The active-site Proton donor is Glu151.

This sequence belongs to the glycosyl hydrolase 19 family. Chitinase class IV subfamily. In terms of tissue distribution, expressed in sheaths and meristems and at lower levels in roots and leaves.

It catalyses the reaction Random endo-hydrolysis of N-acetyl-beta-D-glucosaminide (1-&gt;4)-beta-linkages in chitin and chitodextrins.. Its function is as follows. May function in reproductive organs during embryogenesis and seed maturation. The protein is Chitinase 5 (Cht5) of Oryza sativa subsp. japonica (Rice).